The sequence spans 258 residues: Apolipoprotein A-I (258 aa).

An N-terminal signal peptide occupies residues 1 to 18 (MKFLVLALTILLAAGTQA). A 3 X approximate tandem repeats region spans residues 32–63 (VKAALNMYIAQVKLTAQRSIDLLDDTEYKEYK). 2 consecutive repeat copies span residues 64 to 85 (MQLS…KSWP) and 86 to 106 (PTPR…AEVM). A 10 X approximate tandem repeats region spans residues 64–258 (MQLSQSLDNL…WLSTRPSARP (195 aa)). A 3; half-length repeat occupies 107–117 (KDVEDVRTQLE). Tandem repeats lie at residues 118–139 (PKRA…KKLE), 140–161 (PLIK…AKID), 162–183 (PVVE…TKLM), 184–205 (PIVE…TLAA), 206–227 (PYAE…EKVA), 228–238 (PLSEDFKARWA), and 239–258 (PPPR…SARP). Residues 233–258 (FKARWAPPPRRPSKSSWLSTRPSARP) form a disordered region. Polar residues predominate over residues 246-258 (KSSWLSTRPSARP).

This sequence belongs to the apolipoprotein A1/A4/E family. In terms of tissue distribution, major protein of plasma HDL, also found in chylomicrons. Expressed in liver, intestine and muscle.

The protein resides in the secreted. Participates in the reverse transport of cholesterol from tissues to the liver for excretion by promoting cholesterol efflux from tissues and by acting as a cofactor for the lecithin cholesterol acyltransferase (LCAT). The sequence is that of Apolipoprotein A-I (apoa1) from Salmo salar (Atlantic salmon).